A 161-amino-acid polypeptide reads, in one-letter code: Allophycocyanin beta chain (161 aa).

Asn-71 carries the post-translational modification N4-methylasparagine. (2R,3E)-phycocyanobilin is bound at residue Cys-81.

The protein belongs to the phycobiliprotein family. Heterodimer of an alpha and a beta chain. Post-translationally, contains one covalently linked phycocyanobilin chromophore.

It localises to the cellular thylakoid membrane. Light-harvesting photosynthetic bile pigment-protein from the phycobiliprotein complex. Allophycocyanin has a maximum absorption at approximately 650 nanometers. The polypeptide is Allophycocyanin beta chain (apcB) (Synechocystis sp. (strain ATCC 27184 / PCC 6803 / Kazusa)).